We begin with the raw amino-acid sequence, 264 residues long: S-adenosylmethionine decarboxylase proenzyme (264 aa).

Ser-112 (schiff-base intermediate with substrate; via pyruvic acid) is an active-site residue. Ser-112 carries the post-translational modification Pyruvic acid (Ser); by autocatalysis. His-117 serves as the catalytic Proton acceptor; for processing activity. Cys-140 acts as the Proton donor; for catalytic activity in catalysis.

The protein belongs to the prokaryotic AdoMetDC family. Type 2 subfamily. As to quaternary structure, heterooctamer of four alpha and four beta chains arranged as a tetramer of alpha/beta heterodimers. It depends on pyruvate as a cofactor. In terms of processing, is synthesized initially as an inactive proenzyme. Formation of the active enzyme involves a self-maturation process in which the active site pyruvoyl group is generated from an internal serine residue via an autocatalytic post-translational modification. Two non-identical subunits are generated from the proenzyme in this reaction, and the pyruvate is formed at the N-terminus of the alpha chain, which is derived from the carboxyl end of the proenzyme. The post-translation cleavage follows an unusual pathway, termed non-hydrolytic serinolysis, in which the side chain hydroxyl group of the serine supplies its oxygen atom to form the C-terminus of the beta chain, while the remainder of the serine residue undergoes an oxidative deamination to produce ammonia and the pyruvoyl group blocking the N-terminus of the alpha chain.

It carries out the reaction S-adenosyl-L-methionine + H(+) = S-adenosyl 3-(methylsulfanyl)propylamine + CO2. Its pathway is amine and polyamine biosynthesis; S-adenosylmethioninamine biosynthesis; S-adenosylmethioninamine from S-adenosyl-L-methionine: step 1/1. Functionally, catalyzes the decarboxylation of S-adenosylmethionine to S-adenosylmethioninamine (dcAdoMet), the propylamine donor required for the synthesis of the polyamines spermine and spermidine from the diamine putrescine. The sequence is that of S-adenosylmethionine decarboxylase proenzyme from Serratia proteamaculans (strain 568).